The following is a 232-amino-acid chain: Large ribosomal subunit protein uL1 (232 aa).

This sequence belongs to the universal ribosomal protein uL1 family. Part of the 50S ribosomal subunit.

In terms of biological role, binds directly to 23S rRNA. The L1 stalk is quite mobile in the ribosome, and is involved in E site tRNA release. Protein L1 is also a translational repressor protein, it controls the translation of the L11 operon by binding to its mRNA. The protein is Large ribosomal subunit protein uL1 of Alkaliphilus oremlandii (strain OhILAs) (Clostridium oremlandii (strain OhILAs)).